Consider the following 586-residue polypeptide: 2-succinyl-5-enolpyruvyl-6-hydroxy-3-cyclohexene-1-carboxylate synthase (586 aa).

Belongs to the TPP enzyme family. MenD subfamily. Homodimer. The cofactor is Mg(2+). It depends on Mn(2+) as a cofactor. Thiamine diphosphate serves as cofactor.

It catalyses the reaction isochorismate + 2-oxoglutarate + H(+) = 5-enolpyruvoyl-6-hydroxy-2-succinyl-cyclohex-3-ene-1-carboxylate + CO2. It participates in quinol/quinone metabolism; 1,4-dihydroxy-2-naphthoate biosynthesis; 1,4-dihydroxy-2-naphthoate from chorismate: step 2/7. Its pathway is cofactor biosynthesis; phylloquinone biosynthesis. In terms of biological role, catalyzes the thiamine diphosphate-dependent decarboxylation of 2-oxoglutarate and the subsequent addition of the resulting succinic semialdehyde-thiamine pyrophosphate anion to isochorismate to yield 2-succinyl-5-enolpyruvyl-6-hydroxy-3-cyclohexene-1-carboxylate (SEPHCHC). The sequence is that of 2-succinyl-5-enolpyruvyl-6-hydroxy-3-cyclohexene-1-carboxylate synthase from Acaryochloris marina (strain MBIC 11017).